Reading from the N-terminus, the 914-residue chain is Thyroid peroxidase (914 aa).

The N-terminal stretch at 1–31 (MRTLGAMAIMLVVMGTVIFLSFILRSRDILC) is a signal peptide. The Extracellular segment spans residues 32–834 (GKTMKSHVIS…TCIDSGRLPR (803 aa)). N-linked (GlcNAc...) asparagine glycosylation is present at asparagine 123. A disulfide bond links cysteine 136 and cysteine 152. Residue aspartate 232 participates in heme b binding. Histidine 233 functions as the Proton acceptor in the catalytic mechanism. Aspartate 234 provides a ligand contact to Ca(2+). 2 disulfides stabilise this stretch: cysteine 253/cysteine 263 and cysteine 257/cysteine 278. 2 N-linked (GlcNAc...) asparagine glycosylation sites follow: asparagine 271 and asparagine 299. Ca(2+) contacts are provided by threonine 313, phenylalanine 315, aspartate 317, and serine 319. Asparagine 334 is a glycosylation site (N-linked (GlcNAc...) asparagine). Heme b contacts are provided by glutamate 387 and histidine 482. 7 disulfide bridges follow: cysteine 586-cysteine 643, cysteine 684-cysteine 709, cysteine 730-cysteine 770, cysteine 756-cysteine 782, cysteine 788-cysteine 802, cysteine 796-cysteine 811, and cysteine 813-cysteine 826. N-linked (GlcNAc...) asparagine glycosylation occurs at asparagine 603. In terms of domain architecture, Sushi spans 728 to 783 (DKCVFPEEVDNGNFVHCEESGKLVLVYSCFHGYKLQGQEQVTCTQKGWDSEPPVCK). The EGF-like; calcium-binding domain occupies 784–827 (DVNECADLTHPPCHPSAQCKNTKGSFQCVCTDPYVLGEDEKTCI). A helical transmembrane segment spans residues 835–859 (ASWVSIALGALLIGGLASLTWIVIC). The Cytoplasmic portion of the chain corresponds to 860 to 914 (RWTHADKKATLPITERVTTQSGCRKSQGRGISPHKAAAQDTGQEPASGSRVLLCE). A disordered region spans residues 881-909 (GCRKSQGRGISPHKAAAQDTGQEPASGSR).

The protein belongs to the peroxidase family. XPO subfamily. As to quaternary structure, interacts with DUOX1, DUOX2 and CYBA. Ca(2+) serves as cofactor. It depends on heme b as a cofactor. Heme is covalently bound through a H(2)O(2)-dependent autocatalytic process. Heme insertion is important for the delivery of protein at the cell surface. In terms of processing, cleaved in its N-terminal part.

The protein resides in the membrane. The enzyme catalyses 2 iodide + H2O2 + 2 H(+) = diiodine + 2 H2O. The catalysed reaction is [thyroglobulin]-L-tyrosine + iodide + H2O2 + H(+) = [thyroglobulin]-3-iodo-L-tyrosine + 2 H2O. It carries out the reaction [thyroglobulin]-3-iodo-L-tyrosine + iodide + H2O2 + H(+) = [thyroglobulin]-3,5-diiodo-L-tyrosine + 2 H2O. It catalyses the reaction 2 [thyroglobulin]-3,5-diiodo-L-tyrosine + H2O2 = [thyroglobulin]-L-thyroxine + [thyroglobulin]-dehydroalanine + 2 H2O. The enzyme catalyses [thyroglobulin]-3-iodo-L-tyrosine + [thyroglobulin]-3,5-diiodo-L-tyrosine + H2O2 = [thyroglobulin]-3,3',5-triiodo-L-thyronine + [thyroglobulin]-dehydroalanine + 2 H2O. It participates in hormone biosynthesis; thyroid hormone biosynthesis. Functionally, iodination and coupling of the hormonogenic tyrosines in thyroglobulin to yield the thyroid hormones T(3) and T(4). The polypeptide is Thyroid peroxidase (Tpo) (Mus musculus (Mouse)).